We begin with the raw amino-acid sequence, 304 residues long: Caspase-6 (304 aa).

A disordered region spans residues 1–29 (MSGAERRPAAGRVQLDSKPTPTTTADGNQ). Positions 1–35 (MSGAERRPAAGRVQLDSKPTPTTTADGNQNITEVD) are excised as a propeptide. The span at 17–29 (SKPTPTTTADGNQ) shows a compositional bias: polar residues. Positions 54-56 (QRR) are tri-arginine exosite. His-133 is a catalytic residue. The segment at 137–154 (DHVYAYDAQIKIETITNM) is 130's region. Residue Cys-175 is part of the active site. The propeptide occupies 192–204 (SKDETTVNQTEVD).

This sequence belongs to the peptidase C14A family. In terms of assembly, heterotetramer that consists of two anti-parallel arranged heterodimers, each one formed by a 18 kDa (p18) and a 11 kDa (p11) subunit. As to quaternary structure, heterotetramer that consists of two anti-parallel arranged heterodimers, each one formed by a 18 kDa (Caspase-6 subunit p18) and a 11 kDa (Caspase-6 subunit p11) subunit. In terms of tissue distribution, widely expressed.

Its subcellular location is the cytoplasm. It localises to the nucleus. The catalysed reaction is Strict requirement for Asp at position P1 and has a preferred cleavage sequence of Val-Glu-His-Asp-|-.. During activation, the N-terminal prodomain is removed by cleavage. Concomitantly, double cleavage gives rise to a large 18-kDa and a small 11-kDa subunit. The two large and two small subunits then assemble to form the active CASP6 complex. Intramolecular cleavage at Asp-191 is a prerequisite for CASP6 self-activation. Cysteine protease that plays essential roles in programmed cell death, development and innate immunity. Acts as a non-canonical executioner caspase during apoptosis: localizes in the nucleus and cleaves the nuclear structural protein lamin-A/LMNA thereby inducing nuclear shrinkage and fragmentation. Lamin-A/LMNA cleavage is required for chromatin condensation and nuclear disassembly during apoptotic execution. Plays an essential role in defense against viruses by acting as a central mediator of the ZBP1-mediated pyroptosis, apoptosis, and necroptosis (PANoptosis), independently of its cysteine protease activity. PANoptosis is a unique inflammatory programmed cell death, which provides a molecular scaffold that allows the interactions and activation of machinery required for inflammasome/pyroptosis, apoptosis and necroptosis. The sequence is that of Caspase-6 from Gallus gallus (Chicken).